Here is a 318-residue protein sequence, read N- to C-terminus: UDP-N-acetylenolpyruvoylglucosamine reductase (318 aa).

One can recognise an FAD-binding PCMH-type domain in the interval 38-204; that stretch reads IGGVCPVIVE…LGIEILLKEG (167 aa). The active site involves Arg182. A compositionally biased stretch (basic and acidic residues) spans 212-229; the sequence is SLKDKRDRRNSSQPENKK. The disordered stretch occupies residues 212–232; the sequence is SLKDKRDRRNSSQPENKKSAG. Ser233 functions as the Proton donor in the catalytic mechanism. Residue Glu310 is part of the active site.

The protein belongs to the MurB family. FAD serves as cofactor.

Its subcellular location is the cytoplasm. The catalysed reaction is UDP-N-acetyl-alpha-D-muramate + NADP(+) = UDP-N-acetyl-3-O-(1-carboxyvinyl)-alpha-D-glucosamine + NADPH + H(+). Its pathway is cell wall biogenesis; peptidoglycan biosynthesis. Its function is as follows. Cell wall formation. The protein is UDP-N-acetylenolpyruvoylglucosamine reductase of Leptospira interrogans serogroup Icterohaemorrhagiae serovar Lai (strain 56601).